A 346-amino-acid chain; its full sequence is NADH-ubiquinone oxidoreductase chain 2 (346 aa).

11 consecutive transmembrane segments (helical) span residues 1–21 (MNPH…TITI), 25–45 (HWVL…PLIS), 60–80 (FLTQ…NAWA), 95–115 (CLLL…HFWF), 124–144 (LMTA…LLLM), 149–169 (LNPA…GWMG), 178–195 (ILAF…IILV), 200–219 (LALL…FMAL), 242–262 (ATLM…GFMP), 274–294 (EMTP…FFYL), and 326–346 (AILA…HAIV).

Belongs to the complex I subunit 2 family.

The protein resides in the mitochondrion inner membrane. It catalyses the reaction a ubiquinone + NADH + 5 H(+)(in) = a ubiquinol + NAD(+) + 4 H(+)(out). Its function is as follows. Core subunit of the mitochondrial membrane respiratory chain NADH dehydrogenase (Complex I) that is believed to belong to the minimal assembly required for catalysis. Complex I functions in the transfer of electrons from NADH to the respiratory chain. The immediate electron acceptor for the enzyme is believed to be ubiquinone. This is NADH-ubiquinone oxidoreductase chain 2 (MT-ND2) from Sibirionetta formosa (Baikal teal).